The chain runs to 388 residues: Phosphopentomutase (388 aa).

Mn(2+) is bound by residues aspartate 11, aspartate 283, histidine 288, aspartate 324, histidine 325, and histidine 336.

This sequence belongs to the phosphopentomutase family. Mn(2+) serves as cofactor.

The protein resides in the cytoplasm. It catalyses the reaction 2-deoxy-alpha-D-ribose 1-phosphate = 2-deoxy-D-ribose 5-phosphate. It carries out the reaction alpha-D-ribose 1-phosphate = D-ribose 5-phosphate. The protein operates within carbohydrate degradation; 2-deoxy-D-ribose 1-phosphate degradation; D-glyceraldehyde 3-phosphate and acetaldehyde from 2-deoxy-alpha-D-ribose 1-phosphate: step 1/2. Isomerase that catalyzes the conversion of deoxy-ribose 1-phosphate (dRib-1-P) and ribose 1-phosphate (Rib-1-P) to deoxy-ribose 5-phosphate (dRib-5-P) and ribose 5-phosphate (Rib-5-P), respectively. In Enterococcus faecalis (strain ATCC 700802 / V583), this protein is Phosphopentomutase.